A 527-amino-acid polypeptide reads, in one-letter code: Bifunctional purine biosynthesis protein PurH (527 aa).

The 149-residue stretch at 1-149 (MTADLLPVRR…KNFARVAVAT (149 aa)) folds into the MGS-like domain.

It belongs to the PurH family.

The enzyme catalyses (6R)-10-formyltetrahydrofolate + 5-amino-1-(5-phospho-beta-D-ribosyl)imidazole-4-carboxamide = 5-formamido-1-(5-phospho-D-ribosyl)imidazole-4-carboxamide + (6S)-5,6,7,8-tetrahydrofolate. It catalyses the reaction IMP + H2O = 5-formamido-1-(5-phospho-D-ribosyl)imidazole-4-carboxamide. It functions in the pathway purine metabolism; IMP biosynthesis via de novo pathway; 5-formamido-1-(5-phospho-D-ribosyl)imidazole-4-carboxamide from 5-amino-1-(5-phospho-D-ribosyl)imidazole-4-carboxamide (10-formyl THF route): step 1/1. The protein operates within purine metabolism; IMP biosynthesis via de novo pathway; IMP from 5-formamido-1-(5-phospho-D-ribosyl)imidazole-4-carboxamide: step 1/1. The protein is Bifunctional purine biosynthesis protein PurH of Stenotrophomonas maltophilia (strain K279a).